The following is a 529-amino-acid chain: Peptide chain release factor 3 (529 aa).

A tr-type G domain is found at 11–280 (AKRRTFAIIS…GLIEWAPQPM (270 aa)). Residues 20–27 (SHPDAGKT), 88–92 (DTPGH), and 142–145 (NKLD) contribute to the GTP site.

It belongs to the TRAFAC class translation factor GTPase superfamily. Classic translation factor GTPase family. PrfC subfamily.

The protein resides in the cytoplasm. Increases the formation of ribosomal termination complexes and stimulates activities of RF-1 and RF-2. It binds guanine nucleotides and has strong preference for UGA stop codons. It may interact directly with the ribosome. The stimulation of RF-1 and RF-2 is significantly reduced by GTP and GDP, but not by GMP. The chain is Peptide chain release factor 3 from Enterobacter sp. (strain 638).